Reading from the N-terminus, the 287-residue chain is MAASLWMGDLEPYMDENFISRAFATMGETVMSVKIIRNRLTGIPAGYCFVEFADLATAEKCLHKINGKPLPGATPAKRFKLNYATYGKQPDNSPEYSLFVGDLTPDVDDGMLYEFFVKVYPSCRGGKVVLDQTGVSKGYGFVKFTDELEQKRALTECQGAVGLGCKPVRLSVAIPKASRVKPVEYSQMYSYSYNQYYQQYQNYYAQWGYDQNTGSYSYSYPQYGYTQSTMQTYEEVGDDALEDPAPQLDVTEANKEFMEQSEELYDALMDCHWQPLDTVSSEIPAMM.

2 RRM domains span residues 3-86 (ASLW…YATY) and 96-175 (YSLF…VAIP).

This sequence belongs to the RRM TRSPAP family. In terms of assembly, component of the tRNA(Sec) complex composed at least of EEFSEC, SECISBP2, SEPHS1, SEPSECS, TRNAU1AP and tRNA(Sec). Associates with mRNP and/or polysomes. Found in a complex with tRNA(Sec). Interacts with SEPSECS. Ubiquitous.

It localises to the nucleus. Its subcellular location is the cytoplasm. Functionally, involved in the early steps of selenocysteine biosynthesis and tRNA(Sec) charging to the later steps resulting in the cotranslational incorporation of selenocysteine into selenoproteins. Stabilizes the SECISBP2, EEFSEC and tRNA(Sec) complex. May be involved in the methylation of tRNA(Sec). Enhances efficiency of selenoproteins synthesis. The protein is tRNA selenocysteine 1-associated protein 1 (Trnau1ap) of Rattus norvegicus (Rat).